Consider the following 556-residue polypeptide: Oxygen-dependent choline dehydrogenase (556 aa).

FAD is bound at residue 6–35 (DYIIIGAGSAGNVLAARLTEDPGVSVLLLE). The Proton acceptor role is filled by His475.

It belongs to the GMC oxidoreductase family. FAD serves as cofactor.

The catalysed reaction is choline + A = betaine aldehyde + AH2. It catalyses the reaction betaine aldehyde + NAD(+) + H2O = glycine betaine + NADH + 2 H(+). It functions in the pathway amine and polyamine biosynthesis; betaine biosynthesis via choline pathway; betaine aldehyde from choline (cytochrome c reductase route): step 1/1. In terms of biological role, involved in the biosynthesis of the osmoprotectant glycine betaine. Catalyzes the oxidation of choline to betaine aldehyde and betaine aldehyde to glycine betaine at the same rate. This chain is Oxygen-dependent choline dehydrogenase, found in Xanthomonas campestris pv. campestris (strain 8004).